Consider the following 333-residue polypeptide: Ketol-acid reductoisomerase (NADP(+)) (333 aa).

The KARI N-terminal Rossmann domain occupies 6 to 186; it reads TRVYTECDAD…GALRAGAIQT (181 aa). NADP(+) is bound by residues 29 to 32, K52, S55, S57, and 87 to 90; these read YGSQ and DPAQ. The active site involves H112. An NADP(+)-binding site is contributed by G138. Residues 187-332 form the KARI C-terminal knotted domain; that stretch reads TFTEETETDL…ARLRALFSWS (146 aa). Positions 195, 199, 231, and 235 each coordinate Mg(2+). A substrate-binding site is contributed by S256.

This sequence belongs to the ketol-acid reductoisomerase family. Mg(2+) is required as a cofactor.

The catalysed reaction is (2R)-2,3-dihydroxy-3-methylbutanoate + NADP(+) = (2S)-2-acetolactate + NADPH + H(+). It catalyses the reaction (2R,3R)-2,3-dihydroxy-3-methylpentanoate + NADP(+) = (S)-2-ethyl-2-hydroxy-3-oxobutanoate + NADPH + H(+). The protein operates within amino-acid biosynthesis; L-isoleucine biosynthesis; L-isoleucine from 2-oxobutanoate: step 2/4. It functions in the pathway amino-acid biosynthesis; L-valine biosynthesis; L-valine from pyruvate: step 2/4. In terms of biological role, involved in the biosynthesis of branched-chain amino acids (BCAA). Catalyzes an alkyl-migration followed by a ketol-acid reduction of (S)-2-acetolactate (S2AL) to yield (R)-2,3-dihydroxy-isovalerate. In the isomerase reaction, S2AL is rearranged via a Mg-dependent methyl migration to produce 3-hydroxy-3-methyl-2-ketobutyrate (HMKB). In the reductase reaction, this 2-ketoacid undergoes a metal-dependent reduction by NADPH to yield (R)-2,3-dihydroxy-isovalerate. This Tropheryma whipplei (strain Twist) (Whipple's bacillus) protein is Ketol-acid reductoisomerase (NADP(+)).